Reading from the N-terminus, the 231-residue chain is ATP-dependent dethiobiotin synthetase BioD (231 aa).

12 to 17 (DVGKTV) provides a ligand contact to ATP. Residue Thr16 participates in Mg(2+) binding. Lys37 is a catalytic residue. Residue Thr41 coordinates substrate. Residues Asp50, 109–112 (EGAG), 170–171 (GS), and 200–202 (PAG) each bind ATP. Mg(2+) contacts are provided by Asp50 and Glu109.

This sequence belongs to the dethiobiotin synthetase family. Homodimer. Mg(2+) serves as cofactor.

It localises to the cytoplasm. It carries out the reaction (7R,8S)-7,8-diammoniononanoate + CO2 + ATP = (4R,5S)-dethiobiotin + ADP + phosphate + 3 H(+). Its pathway is cofactor biosynthesis; biotin biosynthesis; biotin from 7,8-diaminononanoate: step 1/2. In terms of biological role, catalyzes a mechanistically unusual reaction, the ATP-dependent insertion of CO2 between the N7 and N8 nitrogen atoms of 7,8-diaminopelargonic acid (DAPA, also called 7,8-diammoniononanoate) to form a ureido ring. This Rhodococcus jostii (strain RHA1) protein is ATP-dependent dethiobiotin synthetase BioD.